The primary structure comprises 36 residues: Cytochrome b6-f complex subunit 7 (36 aa).

Residues 9–29 (NGAFIMIGLTLLGLAWGFVII) form a helical membrane-spanning segment.

Belongs to the PetM family. The 4 large subunits of the cytochrome b6-f complex are cytochrome b6, subunit IV (17 kDa polypeptide, PetD), cytochrome f and the Rieske protein, while the 4 small subunits are PetG, PetL, PetM and PetN. The complex functions as a dimer.

Its subcellular location is the cellular thylakoid membrane. In terms of biological role, component of the cytochrome b6-f complex, which mediates electron transfer between photosystem II (PSII) and photosystem I (PSI), cyclic electron flow around PSI, and state transitions. The sequence is that of Cytochrome b6-f complex subunit 7 from Synechocystis sp. (strain ATCC 27184 / PCC 6803 / Kazusa).